Here is a 175-residue protein sequence, read N- to C-terminus: MAIILGVDPGSRITGYGLIRSEGRLLEYLDSGCIRVGEKPMAERLQTIFHSLAVLIGEYRPEEFAIEQVFMARNPDSALKLGQARGAAIVSAANSGLAVHEYSARQVKQAVVGTGGADKSQVQHMVQALLGLSRKPQADAADALAIALCHAHMNQSVLRMARTGGKVRSGRVRQP.

Active-site residues include D8, E67, and D139. Mg(2+) is bound by residues D8, E67, and D139.

This sequence belongs to the RuvC family. Homodimer which binds Holliday junction (HJ) DNA. The HJ becomes 2-fold symmetrical on binding to RuvC with unstacked arms; it has a different conformation from HJ DNA in complex with RuvA. In the full resolvosome a probable DNA-RuvA(4)-RuvB(12)-RuvC(2) complex forms which resolves the HJ. Requires Mg(2+) as cofactor.

The protein resides in the cytoplasm. It catalyses the reaction Endonucleolytic cleavage at a junction such as a reciprocal single-stranded crossover between two homologous DNA duplexes (Holliday junction).. In terms of biological role, the RuvA-RuvB-RuvC complex processes Holliday junction (HJ) DNA during genetic recombination and DNA repair. Endonuclease that resolves HJ intermediates. Cleaves cruciform DNA by making single-stranded nicks across the HJ at symmetrical positions within the homologous arms, yielding a 5'-phosphate and a 3'-hydroxyl group; requires a central core of homology in the junction. The consensus cleavage sequence is 5'-(A/T)TT(C/G)-3'. Cleavage occurs on the 3'-side of the TT dinucleotide at the point of strand exchange. HJ branch migration catalyzed by RuvA-RuvB allows RuvC to scan DNA until it finds its consensus sequence, where it cleaves and resolves the cruciform DNA. The polypeptide is Crossover junction endodeoxyribonuclease RuvC (Marinobacter nauticus (strain ATCC 700491 / DSM 11845 / VT8) (Marinobacter aquaeolei)).